We begin with the raw amino-acid sequence, 225 residues long: MDVVFALGGSVLMPKEGASTENIQNYAQAFKKLKEMGHRVSVVVGGGNTARQYISVAREFTNESFCDEIGILATRMNSMLLISALGKDAVKQVPENFKDAELILNMDKILVMGGTHPAHTTDAVSATLAEFIDADLLVIATNVDGVYTKDPRCNEDAVKLDKINTKELLEITGSNSMSAGSSGVVDPLASKIIDRAKLKTIVIKGIPEEILASISGNHNGTTITP.

Residue 9–10 (GS) coordinates ATP. Gly46 is a binding site for UMP. ATP contacts are provided by Gly47 and Arg51. UMP contacts are provided by residues Asp67 and 115–121 (THPAHTT). 4 residues coordinate ATP: Thr141, Asn142, Tyr147, and Asp150.

It belongs to the UMP kinase family. As to quaternary structure, homohexamer.

The protein localises to the cytoplasm. It catalyses the reaction UMP + ATP = UDP + ADP. The protein operates within pyrimidine metabolism; CTP biosynthesis via de novo pathway; UDP from UMP (UMPK route): step 1/1. Inhibited by UTP. Catalyzes the reversible phosphorylation of UMP to UDP. The sequence is that of Uridylate kinase from Methanococcus maripaludis (strain C7 / ATCC BAA-1331).